We begin with the raw amino-acid sequence, 48 residues long: NLVQFSNMIQCANHGSRPTRHYVDYGCYCGWGGSGTPVDELDRCCQTH.

Ca(2+) is bound by residues Tyr28, Gly30, and Gly32. A disulfide bridge links Cys29 with Cys45. His48 is an active-site residue.

Requires Ca(2+) as cofactor. In terms of tissue distribution, expressed by the venom gland.

It is found in the secreted. It catalyses the reaction a 1,2-diacyl-sn-glycero-3-phosphocholine + H2O = a 1-acyl-sn-glycero-3-phosphocholine + a fatty acid + H(+). In terms of biological role, snake venom phospholipase A2 (PLA2) that inhibits collagen-induced platelet aggregation. In terms of inhibition of platelet aggregation, superbin d is less potent as superbin a, b, and c. PLA2 catalyzes the calcium-dependent hydrolysis of the 2-acyl groups in 3-sn-phosphoglycerides. This Austrelaps superbus (Lowland copperhead snake) protein is Phospholipase A2 superbin d.